We begin with the raw amino-acid sequence, 603 residues long: Alpha-1,2-mannosyltransferase algn-9 (603 aa).

A disordered region spans residues 1-25 (MVTHRRKGGSGPPQKPPPRIVDRSS). The Lumenal portion of the chain corresponds to 1–108 (MVTHRRKGGS…EYSPVYAIRS (108 aa)). The chain crosses the membrane as a helical span at residues 109–129 (YFYIYLHYIPASLFANLFGDT). Position 130 (K130) is a topological domain, cytoplasmic. The chain crosses the membrane as a helical span at residues 131-151 (IVVFTLIRLTIGLFCLLGEYY). At 152-166 (AFDAICKKINIATGR) the chain is on the lumenal side. A helical membrane pass occupies residues 167 to 187 (FFILFSIFSSGMFLASTAFVP). The Cytoplasmic portion of the chain corresponds to 188-195 (SSFCMAIT). A helical membrane pass occupies residues 196–216 (FYILGAYLNENWTAGIFCVAF). Residues 217 to 218 (ST) are Lumenal-facing. The chain crosses the membrane as a helical span at residues 219–239 (MVGWPFSAVLGLPIVADMLLL). Topologically, residues 240–245 (KGLRIR) are cytoplasmic. A helical membrane pass occupies residues 246 to 266 (FILTSLVIGLCIGGVQVITDS). The Lumenal segment spans residues 267 to 310 (HYFGKTVLAPLNIFLYNVVSGPGPSLYGEEPLSFYIKNLFNNWN). The helical transmembrane segment at 311-331 (IVIFAAPFGFPLSLAYFTKVW) threads the bilayer. The Cytoplasmic portion of the chain corresponds to 332–343 (MSQDRNVALYQR). A helical membrane pass occupies residues 344 to 364 (FAPIILLAVTTAAWLLIFGSQ). Over 365-370 (AHKEER) the chain is Lumenal. The chain crosses the membrane as a helical span at residues 371–391 (FLFPIYPFIAFFAALALDATN). Residues 392–397 (RLCLKK) are Cytoplasmic-facing. The chain crosses the membrane as a helical span at residues 398-418 (LGMDNILSILFILCFAILSAS). The Lumenal segment spans residues 419-603 (RTYSIHNNYG…TCTLYRKSNL (185 aa)). N443 is a glycosylation site (N-linked (GlcNAc...) asparagine).

It belongs to the glycosyltransferase 22 family.

It localises to the endoplasmic reticulum membrane. The enzyme catalyses an alpha-D-Man-(1-&gt;2)-alpha-D-Man-(1-&gt;2)-alpha-D-Man-(1-&gt;3)-[alpha-D-Man-(1-&gt;3)-alpha-D-Man-(1-&gt;6)]-beta-D-Man-(1-&gt;4)-beta-D-GlcNAc-(1-&gt;4)-alpha-D-GlcNAc-diphospho-di-trans,poly-cis-dolichol + a di-trans,poly-cis-dolichyl beta-D-mannosyl phosphate = an alpha-D-Man-(1-&gt;2)-alpha-D-Man-(1-&gt;2)-alpha-D-Man-(1-&gt;3)-[alpha-D-Man-(1-&gt;2)-alpha-D-Man-(1-&gt;3)-alpha-D-Man-(1-&gt;6)]-beta-D-Man-(1-&gt;4)-beta-D-GlcNAc-(1-&gt;4)-alpha-D-GlcNAc-diphospho-di-trans,poly-cis-dolichol + a di-trans,poly-cis-dolichyl phosphate + H(+). It catalyses the reaction an alpha-D-Man-(1-&gt;2)-alpha-D-Man-(1-&gt;2)-alpha-D-Man-(1-&gt;3)-[alpha-D-Man-(1-&gt;2)-alpha-D-Man-(1-&gt;3)-[alpha-D-Man-(1-&gt;6)]-alpha-D-Man-(1-&gt;6)]-beta-D-Man-(1-&gt;4)-beta-D-GlcNAc-(1-&gt;4)-alpha-D-GlcNAc-diphospho-di-trans,poly-cis-dolichol + a di-trans,poly-cis-dolichyl beta-D-mannosyl phosphate = an alpha-D-Man-(1-&gt;2)-alpha-D-Man-(1-&gt;2)-alpha-D-Man-(1-&gt;3)-[alpha-D-Man-(1-&gt;2)-alpha-D-Man-(1-&gt;3)-[alpha-D-Man-(1-&gt;2)-alpha-D-Man-(1-&gt;6)]-alpha-D-Man-(1-&gt;6)]-beta-D-Man-(1-&gt;4)-beta-D-GlcNAc-(1-&gt;4)-alpha-D-GlcNAc-diphospho-di-trans,poly-cis-dolichol + a di-trans,poly-cis-dolichyl phosphate + H(+). Its pathway is protein modification; protein glycosylation. Functionally, catalyzes the transfer of mannose from Dol-P-Man to lipid-linked oligosaccharides. The protein is Alpha-1,2-mannosyltransferase algn-9 of Caenorhabditis elegans.